Consider the following 2471-residue polypeptide: Probable polyketide synthase 24 (2471 aa).

Positions 21–449 (ENLVAIVGVG…GSNCCLVLSQ (429 aa)) constitute a Ketosynthase family 3 (KS3) domain. Catalysis depends on for beta-ketoacyl synthase activity residues cysteine 190, histidine 332, and histidine 372. The acyl/malonyl transferase stretch occupies residues 654-687 (GIKASFMLGHSLGEVTTAYCSGMIDIDQLCYLIY). Serine 664 acts as the For acyl/malonyl transferase activity in catalysis. The N-terminal hotdog fold stretch occupies residues 953 to 1075 (ISILGNSMQD…SNFHLNSNDN (123 aa)). The 293-residue stretch at 953–1245 (ISILGNSMQD…VKSLTPVKDP (293 aa)) folds into the PKS/mFAS DH domain. Histidine 987 (proton acceptor; for dehydratase activity) is an active-site residue. Residues 1094–1245 (NLSSIPWDEF…VKSLTPVKDP (152 aa)) form a C-terminal hotdog fold region. Residue aspartate 1157 is the Proton donor; for dehydratase activity of the active site. Residues 1426–1469 (IINEQQQQQQQQQQQQQQQQQQQQQLLNNENNKESLKNLLVNCN) adopt a coiled-coil conformation. Residues 2336–2413 (SSSTNVKNKF…MVYQIINDSL (78 aa)) enclose the Carrier domain. Serine 2373 is modified (O-(pantetheine 4'-phosphoryl)serine).

The cofactor is pantetheine 4'-phosphate.

Its function is as follows. Probable polyketide synthase. In Dictyostelium discoideum (Social amoeba), this protein is Probable polyketide synthase 24 (pks24).